Consider the following 296-residue polypeptide: N-acetylmuramic acid 6-phosphate etherase (296 aa).

Positions 54-217 (VTESFRKGGR…STTSMVGIGK (164 aa)) constitute an SIS domain. The active-site Proton donor is glutamate 82. Residue glutamate 113 is part of the active site.

It belongs to the GCKR-like family. MurNAc-6-P etherase subfamily. In terms of assembly, homodimer.

The catalysed reaction is N-acetyl-D-muramate 6-phosphate + H2O = N-acetyl-D-glucosamine 6-phosphate + (R)-lactate. Its pathway is amino-sugar metabolism; N-acetylmuramate degradation. Its function is as follows. Specifically catalyzes the cleavage of the D-lactyl ether substituent of MurNAc 6-phosphate, producing GlcNAc 6-phosphate and D-lactate. In Listeria welshimeri serovar 6b (strain ATCC 35897 / DSM 20650 / CCUG 15529 / CIP 8149 / NCTC 11857 / SLCC 5334 / V8), this protein is N-acetylmuramic acid 6-phosphate etherase.